The sequence spans 136 residues: Large ribosomal subunit protein bL17 (136 aa).

The protein belongs to the bacterial ribosomal protein bL17 family. As to quaternary structure, part of the 50S ribosomal subunit. Contacts protein L32.

The sequence is that of Large ribosomal subunit protein bL17 from Rickettsia canadensis (strain McKiel).